We begin with the raw amino-acid sequence, 374 residues long: Cyclin-D (374 aa).

It belongs to the cyclin family. Cyclin D subfamily.

The protein is Cyclin-D (CycD) of Ostreococcus tauri.